The chain runs to 121 residues: Small ribosomal subunit protein uS13 (121 aa).

Residues 91–121 (HRRGLPVRGQNSKNNARTRKGPRRTVANKKK) form a disordered region. A compositionally biased stretch (basic residues) spans 106–121 (ARTRKGPRRTVANKKK).

Belongs to the universal ribosomal protein uS13 family. Part of the 30S ribosomal subunit. Forms a loose heterodimer with protein S19. Forms two bridges to the 50S subunit in the 70S ribosome.

Its function is as follows. Located at the top of the head of the 30S subunit, it contacts several helices of the 16S rRNA. In the 70S ribosome it contacts the 23S rRNA (bridge B1a) and protein L5 of the 50S subunit (bridge B1b), connecting the 2 subunits; these bridges are implicated in subunit movement. Contacts the tRNAs in the A and P-sites. In Bacillus cereus (strain AH187), this protein is Small ribosomal subunit protein uS13.